The sequence spans 750 residues: MADEISNPVDPSQSLKRPLEGEQLEEAHPPQPILPEDSAVTKAEKVERNGTNGDSVDNGEPSAKRVRIEEKNHKPTAADSRDRIRGIAPVKAEYLIQPAGSRSATDDRNPAENDDDAEGKPRGDERDNGGKKKKKAKGQNKDRQFGSWGDKIKLCNSISNSSEFSPKECSFGDSCKCEHNLRKYLAEGRRADLTTFNSKCPVWEDNGTCLAGWKCRFVGSHSKEIQREDGRMELVLIDDSDRMGDTALGYEEALGSVVNVISTKDKIDLAKKKTPMEKSDLYTTWLDQNSEEVNRQSNLRKDQKNDQTEEEKQENRARYVEPPFLPSEKRRIYFGPETPVLAPLTTQGNLPFRRLCVELGAQLTYSEMAMSIPLLQGQKSEWALMKAHKSEVTPPRVNSDRTSIVRKYDNSKDLKFGTQISASKPFMAIKAAEVLSRFVPHLRVIDLNCGCPIELVYRQGAGSALLDAPSKLEKMIRGMNAVSGEVPITAKIRMGTMTGKPTAFKTIERLAFGGVESRERLGAPGCAAITLHGRSRQQRYTKSADWSYIAECAALVKSYNQKKDDLTDTVMEPDARTLPNAPDGKIHFIGNGDCYSHIDYLDHIQNAGVDSVMVARGALIKPWLFEEIEKGQVLDKSASERLEYVEKFTRYGLEAWGSDEIGVGQTRRFLLEWLSFAHRYVPAGILEHLPPSLQDRPPAYRGRNDLETLLASDNYMDWMKISEMFLGPAHEGFKFQPKHKSNSYEIEAEG.

The segment at 1–145 (MADEISNPVD…AKGQNKDRQF (145 aa)) is disordered. Basic and acidic residues-rich tracts occupy residues 17–28 (RPLEGEQLEEAH), 62–73 (SAKRVRIEEKNH), and 118–130 (EGKP…DNGG). C3H1-type zinc fingers lie at residues 155 to 179 (CNSI…KCEH) and 200 to 221 (CPVW…VGSH). The interval 292–319 (EVNRQSNLRKDQKNDQTEEEKQENRARY) is disordered. FMN-binding positions include 343 to 345 (PLT) and Q419. The active-site Proton donor is C451. Residues K491, H532, 591 to 593 (NGD), and 615 to 616 (AR) contribute to the FMN site.

This sequence belongs to the Dus family. Dus3 subfamily. Requires FMN as cofactor.

Its subcellular location is the cytoplasm. The protein resides in the nucleus. It carries out the reaction 5,6-dihydrouridine(47) in tRNA + NAD(+) = uridine(47) in tRNA + NADH + H(+). The catalysed reaction is 5,6-dihydrouridine(47) in tRNA + NADP(+) = uridine(47) in tRNA + NADPH + H(+). The enzyme catalyses a 5,6-dihydrouridine in mRNA + NAD(+) = a uridine in mRNA + NADH + H(+). It catalyses the reaction a 5,6-dihydrouridine in mRNA + NADP(+) = a uridine in mRNA + NADPH + H(+). Functionally, catalyzes the synthesis of dihydrouridine, a modified base found in the D-loop of most tRNAs. Specifically modifies U47 in cytoplasmic tRNAs. Catalyzes the synthesis of dihydrouridine in some mRNAs, thereby affecting their translation. The polypeptide is tRNA-dihydrouridine(47) synthase [NAD(P)(+)] (dus3) (Botryotinia fuckeliana (strain B05.10) (Noble rot fungus)).